The chain runs to 403 residues: Renin (403 aa).

Residues 1–22 (MARCRMPRWGLLLVLWGSCTFG) form the signal peptide. Positions 23-65 (LPADTGAFRRIFLKKMPSIRESLKERGVDVAGLGAEWNQFTKR) are cleaved as a propeptide — activation peptide. N-linked (GlcNAc...) asparagine glycosylation occurs at Asn-70. The Peptidase A1 domain maps to 85 to 400 (YYGEIGIGTP…DRHNNRIGFA (316 aa)). Asp-103 is a catalytic residue. Cysteines 116 and 123 form a disulfide. Asn-140 is a glycosylation site (N-linked (GlcNAc...) asparagine). Residues Cys-279 and Cys-283 are joined by a disulfide bond. The active site involves Asp-288. The cysteines at positions 322 and 359 are disulfide-linked.

Belongs to the peptidase A1 family. Interacts with ATP6AP2.

It is found in the secreted. The protein resides in the membrane. It carries out the reaction Cleavage of Leu-|-Xaa bond in angiotensinogen to generate angiotensin I.. With respect to regulation, interaction with ATP6AP2 results in a 5-fold increased efficiency in angiotensinogen processing. Renin is a highly specific endopeptidase, whose only known function is to generate angiotensin I from angiotensinogen in the plasma, initiating a cascade of reactions that produce an elevation of blood pressure and increased sodium retention by the kidney. The chain is Renin (REN) from Canis lupus familiaris (Dog).